A 253-amino-acid polypeptide reads, in one-letter code: Protein C1orf43 (253 aa).

Residues 11–31 form a helical membrane-spanning segment; it reads VNVVLVMAYGSLVFVLLFIFV.

The protein localises to the membrane. The protein resides in the golgi apparatus. It is found in the mitochondrion. Functionally, general regulator of phagocytosis. Required to uptake Gram negative bacterium by macrophages. The protein is Protein C1orf43 (C1orf43) of Homo sapiens (Human).